The chain runs to 217 residues: Guanylate kinase (217 aa).

A compositionally biased stretch (low complexity) spans 1–10 (MAVSSTTLSS). The segment at 1–30 (MAVSSTTLSSPTPPECLQQQEAPRPPATRG) is disordered. One can recognise a Guanylate kinase-like domain in the interval 30–208 (GRLVVLTGPS…ALQELEALLY (179 aa)). 37 to 44 (GPSGVGKG) contacts ATP.

Belongs to the guanylate kinase family.

It localises to the cytoplasm. It carries out the reaction GMP + ATP = GDP + ADP. The enzyme catalyses dZMP + ATP = dZDP + ADP. It participates in purine metabolism. Essential for recycling GMP and indirectly, cGMP. In terms of biological role, (Microbial infection) Catalyzes the phosphorylation of dZMP to dZDP, when the bacterium is infected by a phage that produces the substrate for the synthesis of dZTP (2- amino-2'-deoxyadenosine 5'-triphosphate), which is then used by the phage as a DNA polymerase substrate. In Synechococcus sp. (strain JA-3-3Ab) (Cyanobacteria bacterium Yellowstone A-Prime), this protein is Guanylate kinase.